A 210-amino-acid chain; its full sequence is 3-hexulose-6-phosphate synthase (210 aa).

It belongs to the HPS/KGPDC family. HPS subfamily.

It catalyses the reaction D-ribulose 5-phosphate + formaldehyde = D-arabino-hex-3-ulose 6-phosphate. It participates in one-carbon metabolism; formaldehyde assimilation via RuMP pathway; D-fructose 6-phosphate from D-ribulose 5-phosphate and formaldehyde: step 1/2. Functionally, catalyzes the condensation of ribulose 5-phosphate with formaldehyde to form 3-hexulose 6-phosphate. The chain is 3-hexulose-6-phosphate synthase from Staphylococcus aureus (strain MRSA252).